We begin with the raw amino-acid sequence, 389 residues long: LL-diaminopimelate aminotransferase (389 aa).

Positions 13 and 38 each coordinate substrate. Pyridoxal 5'-phosphate-binding positions include tyrosine 67, serine 101 to lysine 102, tyrosine 126, asparagine 176, tyrosine 207, and serine 235 to serine 237. Substrate contacts are provided by lysine 102, tyrosine 126, and asparagine 176. The residue at position 238 (lysine 238) is an N6-(pyridoxal phosphate)lysine. Arginine 246 provides a ligand contact to pyridoxal 5'-phosphate. Position 364 (arginine 364) interacts with substrate.

It belongs to the class-I pyridoxal-phosphate-dependent aminotransferase family. LL-diaminopimelate aminotransferase subfamily. Homodimer. Pyridoxal 5'-phosphate serves as cofactor.

It carries out the reaction (2S,6S)-2,6-diaminopimelate + 2-oxoglutarate = (S)-2,3,4,5-tetrahydrodipicolinate + L-glutamate + H2O + H(+). It participates in amino-acid biosynthesis; L-lysine biosynthesis via DAP pathway; LL-2,6-diaminopimelate from (S)-tetrahydrodipicolinate (aminotransferase route): step 1/1. In terms of biological role, involved in the synthesis of meso-diaminopimelate (m-DAP or DL-DAP), required for both lysine and peptidoglycan biosynthesis. Catalyzes the direct conversion of tetrahydrodipicolinate to LL-diaminopimelate. The polypeptide is LL-diaminopimelate aminotransferase (Halothermothrix orenii (strain H 168 / OCM 544 / DSM 9562)).